The sequence spans 1705 residues: Clathrin heavy chain 1 (1705 aa).

Residue alanine 2 is modified to N-acetylalanine. Positions 2-492 (AAANAPIIMK…VDNDLALKIY (491 aa)) are globular terminal domain. 7 WD40-like repeat regions span residues 25–67 (FITF…RPIT), 68–113 (ADSA…MPEQ), 114–155 (VAFW…ANLA), 156–205 (NNQI…QALE), 206–270 (AHAA…PDFA), 271–314 (DDFP…ISPD), and 315–343 (PIFLTSEASSVGGFYAINRRGQVLLATVN). The segment at 462-478 (ENWLAEDKLECSEELGD) is binding site for the uncoating ATPase, involved in lattice disassembly. A flexible linker region spans residues 493-536 (IKARATPKVVAAFAERREFDKILIYSKQVGYTPDYMFLLQTILR). The interval 537–648 (TDPQGAVNFA…QSLKHYSELP (112 aa)) is distal segment. The tract at residues 537 to 1705 (TDPQGAVNFA…PYGMPPMGGY (1169 aa)) is heavy chain arm. CHCR repeat units follow at residues 551–697 (QMEG…QIIV), 700–842 (CKEY…PEDF), 847–986 (ILSV…QLID), 993–1138 (LPES…VSDA), 1142–1283 (FIRA…FRLA), 1288–1434 (LNII…DIIN), and 1437–1580 (LNVL…KECF). Residues 653 to 1705 (VIVNTHAIEP…PYGMPPMGGY (1053 aa)) form a proximal segment region. The tract at residues 1227–1536 (AAKIIYAFIS…YIYKKAGRWK (310 aa)) is involved in binding clathrin light chain. The tract at residues 1564-1705 (AEQLLVYFIE…PYGMPPMGGY (142 aa)) is trimerization.

The protein belongs to the clathrin heavy chain family. In terms of assembly, clathrin triskelions, composed of 3 heavy chains and 3 light chains, are the basic subunits of the clathrin coat. Interacts with SCYL2B.

The protein localises to the cytoplasmic vesicle membrane. The protein resides in the membrane. It is found in the coated pit. Its function is as follows. Clathrin is the major protein of the polyhedral coat of coated pits and vesicles. Mediates endocytosis and is required for a correct polar distribution of PIN auxin transporters. This Arabidopsis thaliana (Mouse-ear cress) protein is Clathrin heavy chain 1.